A 275-amino-acid chain; its full sequence is 1-deoxy-11-beta-hydroxypentalenate dehydrogenase (275 aa).

12–36 lines the NAD(+) pocket; that stretch reads GAASGIGLALSARFARAGAGVVMAD. S144 contributes to the substrate binding site. Y157 acts as the Proton acceptor in catalysis. K161 contacts NAD(+).

Belongs to the short-chain dehydrogenases/reductases (SDR) family.

The enzyme catalyses 1-deoxy-11beta-hydroxypentalenate + NAD(+) = 1-deoxy-11-oxopentalenate + NADH + H(+). It participates in antibiotic biosynthesis; pentalenolactone biosynthesis. Functionally, catalyzes the oxidation of 1-deoxy-11-beta-hydroxypentalenic acid to 1-deoxy-11-oxopentalenic acid in the biosynthesis of pentalenolactone antibiotic. This is 1-deoxy-11-beta-hydroxypentalenate dehydrogenase (penF) from Streptomyces exfoliatus (Streptomyces hydrogenans).